The primary structure comprises 133 residues: Small ribosomal subunit protein uS8c (133 aa).

Disordered stretches follow at residues 1 to 23 (MGND…GAET) and 44 to 133 (FSGN…HVWR). Composition is skewed to polar residues over residues 12–23 (APRNASSRGAET) and 55–66 (TNRFPVSTSKYQ). A compositionally biased stretch (basic residues) spans 67-81 (GRTRKARITTRRRVS). Residues 114–133 (TDREARQKRIGGEAPRHVWR) show a composition bias toward basic and acidic residues.

This sequence belongs to the universal ribosomal protein uS8 family. Part of the 30S ribosomal subunit.

It is found in the plastid. Its subcellular location is the chloroplast. One of the primary rRNA binding proteins, it binds directly to 16S rRNA central domain where it helps coordinate assembly of the platform of the 30S subunit. The chain is Small ribosomal subunit protein uS8c (rps8) from Selaginella uncinata (Blue spike-moss).